Here is a 500-residue protein sequence, read N- to C-terminus: Lysine--tRNA ligase (500 aa).

Mg(2+)-binding residues include Glu410 and Glu417.

It belongs to the class-II aminoacyl-tRNA synthetase family. In terms of assembly, homodimer. Mg(2+) is required as a cofactor.

Its subcellular location is the cytoplasm. It catalyses the reaction tRNA(Lys) + L-lysine + ATP = L-lysyl-tRNA(Lys) + AMP + diphosphate. In Shewanella denitrificans (strain OS217 / ATCC BAA-1090 / DSM 15013), this protein is Lysine--tRNA ligase.